Consider the following 182-residue polypeptide: MRVSEISKRYAKALLAVAKQKGIHTQVHAELQALVKSFAGDVSVKNYFENPMIGSDQKIAAVKASLSGKGVSEEVVNTLVLLAEKNRFGVLEQISFAYRDLLDLEEGVTRGVVRSAQPLAADAQKDIEQKITKVLNKKIVLTYEQDPKLLGGIVATVGGWTFDDSIDTHLKKLNEELNRRAN.

This sequence belongs to the ATPase delta chain family. F-type ATPases have 2 components, F(1) - the catalytic core - and F(0) - the membrane proton channel. F(1) has five subunits: alpha(3), beta(3), gamma(1), delta(1), epsilon(1). F(0) has three main subunits: a(1), b(2) and c(10-14). The alpha and beta chains form an alternating ring which encloses part of the gamma chain. F(1) is attached to F(0) by a central stalk formed by the gamma and epsilon chains, while a peripheral stalk is formed by the delta and b chains.

The protein localises to the cell inner membrane. Its function is as follows. F(1)F(0) ATP synthase produces ATP from ADP in the presence of a proton or sodium gradient. F-type ATPases consist of two structural domains, F(1) containing the extramembraneous catalytic core and F(0) containing the membrane proton channel, linked together by a central stalk and a peripheral stalk. During catalysis, ATP synthesis in the catalytic domain of F(1) is coupled via a rotary mechanism of the central stalk subunits to proton translocation. This protein is part of the stalk that links CF(0) to CF(1). It either transmits conformational changes from CF(0) to CF(1) or is implicated in proton conduction. This Bdellovibrio bacteriovorus (strain ATCC 15356 / DSM 50701 / NCIMB 9529 / HD100) protein is ATP synthase subunit delta.